Reading from the N-terminus, the 241-residue chain is Cobalt transport protein CbiM (241 aa).

An N-terminal signal peptide occupies residues 1-24; that stretch reads MKKIKIISFSVAYLILLTPIYASA. 6 helical membrane passes run 30 to 50, 67 to 87, 99 to 119, 131 to 151, 160 to 180, and 202 to 222; these read GFLP…FIVG, LLLG…LPSV, LGTI…VLIF, TLGA…YFIF, SLAV…VTSL, and GIFA…TLIV.

The protein belongs to the CbiM family. As to quaternary structure, forms an energy-coupling factor (ECF) transporter complex composed of an ATP-binding protein (A component, CbiO), a transmembrane protein (T component, CbiQ) and 2 possible substrate-capture proteins (S components, CbiM and CbiN) of unknown stoichimetry.

Its subcellular location is the cell membrane. Its pathway is cofactor biosynthesis; adenosylcobalamin biosynthesis. Its function is as follows. Part of the energy-coupling factor (ECF) transporter complex CbiMNOQ involved in cobalt import. This chain is Cobalt transport protein CbiM, found in Acetoanaerobium sticklandii (strain ATCC 12662 / DSM 519 / JCM 1433 / CCUG 9281 / NCIMB 10654 / HF) (Clostridium sticklandii).